Consider the following 7785-residue polypeptide: Probable non-canonical nonribosomal peptide synthetase (NRPS) CymA (7785 aa).

Carrier domains follow at residues 487–562, 1908–1983, and 2958–3033; these read TARS…QRQE, HART…SEQQ, and SPGM…LEGG. O-(pantetheine 4'-phosphoryl)serine occurs at positions 522, 1943, and 2993. The stretch at 3088-3111 is one LRR 1 repeat; the sequence is RLALADVVVRHEALRTVFAERAGN. Carrier domains lie at 3978-4053, 5002-5077, and 6389-6464; these read APRT…SEQQ, EPRT…LEAN, and GPRD…AQGS. Residues serine 4013, serine 5037, and serine 6424 each carry the O-(pantetheine 4'-phosphoryl)serine modification. One copy of the LRR 2 repeat lies at 6853–6875; the sequence is TGVSRVDLSVNAIETFDDHGLPA. The 76-residue stretch at 7432 to 7507 folds into the Carrier 7 domain; it reads GPRTPQEEIL…QLAEQLGSDG (76 aa). Residue serine 7467 is modified to O-(pantetheine 4'-phosphoryl)serine.

Pantetheine 4'-phosphate is required as a cofactor.

Its function is as follows. Probable non-canonical nonribosomal peptide synthetase (NRPS); part of the gene cluster that mediates the biosynthesis of cyclic heptapeptides, known as cyclomarins and also of cyclic dipeptides, called cyclomarazines, which have both antimicrobial and cytotoxic effects. First, CymD catalyzes the reverse N-prenylation of monomeric L-tryptophan with dimethylallyl diphosphate (DMAPP) to form N-(1,1-dimethylallyl)-tryptophan (r-N-DMAT). The N-(1,1-dimethylallyl)-tryptophan produced by CymD is then combined with a range of standard and nonproteinogenic amino acid substrates to synthesize the peptides, a process that is probably catalyzed by the non-canonical nonribosomal peptide synthetase (NRPS), CymA. Other proteins in the cluster catalyze further modifications of the peptides including CymV which catalyzes the oxidation of olefinic cyclomarins and cyclomarazines to their respective epoxide derivatives. This is Probable non-canonical nonribosomal peptide synthetase (NRPS) CymA from Salinispora arenicola (strain CNS-205).